We begin with the raw amino-acid sequence, 555 residues long: Formate--tetrahydrofolate ligase (555 aa).

65–72 (TPAGEGKT) lines the ATP pocket.

This sequence belongs to the formate--tetrahydrofolate ligase family.

The catalysed reaction is (6S)-5,6,7,8-tetrahydrofolate + formate + ATP = (6R)-10-formyltetrahydrofolate + ADP + phosphate. It participates in one-carbon metabolism; tetrahydrofolate interconversion. The polypeptide is Formate--tetrahydrofolate ligase (Caldanaerobacter subterraneus subsp. tengcongensis (strain DSM 15242 / JCM 11007 / NBRC 100824 / MB4) (Thermoanaerobacter tengcongensis)).